The chain runs to 96 residues: DNA-directed RNA polymerase subunit Rpo11 (96 aa).

It belongs to the archaeal Rpo11/eukaryotic RPB11/RPC19 RNA polymerase subunit family. In terms of assembly, part of the RNA polymerase complex.

It localises to the cytoplasm. The catalysed reaction is RNA(n) + a ribonucleoside 5'-triphosphate = RNA(n+1) + diphosphate. Functionally, DNA-dependent RNA polymerase (RNAP) catalyzes the transcription of DNA into RNA using the four ribonucleoside triphosphates as substrates. The protein is DNA-directed RNA polymerase subunit Rpo11 of Nanoarchaeum equitans (strain Kin4-M).